Here is a 343-residue protein sequence, read N- to C-terminus: 4-hydroxy-2-oxovalerate aldolase 1 (343 aa).

The region spanning 8–260 is the Pyruvate carboxyltransferase domain; sequence ITVHDMSLRD…ETGVDVFAIS (253 aa). A substrate-binding site is contributed by 16–17; the sequence is RD. D17 provides a ligand contact to Mn(2+). H20 acts as the Proton acceptor in catalysis. S170 and H199 together coordinate substrate. Mn(2+) is bound by residues H199 and H201. Y290 is a substrate binding site.

Belongs to the 4-hydroxy-2-oxovalerate aldolase family.

It carries out the reaction (S)-4-hydroxy-2-oxopentanoate = acetaldehyde + pyruvate. This chain is 4-hydroxy-2-oxovalerate aldolase 1 (bphI), found in Burkholderia cenocepacia (strain ATCC BAA-245 / DSM 16553 / LMG 16656 / NCTC 13227 / J2315 / CF5610) (Burkholderia cepacia (strain J2315)).